Here is a 700-residue protein sequence, read N- to C-terminus: Acyl-coenzyme A oxidase 3 (700 aa).

It belongs to the acyl-CoA oxidase family. As to quaternary structure, heteropentamer composed of five different subunits. FAD serves as cofactor.

The protein localises to the peroxisome. The enzyme catalyses a 2,3-saturated acyl-CoA + O2 = a (2E)-enoyl-CoA + H2O2. Its pathway is lipid metabolism; peroxisomal fatty acid beta-oxidation. In terms of biological role, oxidizes aliphatic acyl-CoA substrates of different chain lengths such as hexanoyl-CoA, decanoyl-CoA and myristoyl-CoA as well as aromatic/heterocyclic ring-substituted chromogenic substrates, such as furylpropionyl-CoA. Of the above substrates, the efficiency of the enzyme, exhibits the following order: decanoyl-CoA &gt; myristoyl-CoA &gt; hexanoyl-CoA &gt; furyl-propionyl-CoA. The polypeptide is Acyl-coenzyme A oxidase 3 (POX3) (Yarrowia lipolytica (strain CLIB 122 / E 150) (Yeast)).